Reading from the N-terminus, the 35-residue chain is Potassium channel toxin (35 aa).

Intrachain disulfides connect cysteine 6–cysteine 25, cysteine 11–cysteine 30, and cysteine 15–cysteine 32.

The protein belongs to the short scorpion toxin superfamily. Potassium channel inhibitor family. Alpha-KTx 21 subfamily. As to expression, expressed by the venom gland.

Its subcellular location is the secreted. Functionally, toxin that blocks voltage-gated potassium channels (Kv). This Tityus metuendus (Scorpion) protein is Potassium channel toxin.